The chain runs to 702 residues: MNSLFASTARGLEELLKTELENLGAVECQVVQGGVHFKGDTRLVYQSLMWSRLASRIMLPLGECKVYSDLDLYLGVQAINWTEMFNPGATFAVHFSGLNDTIRNSQYGAMKVKDAIVDAFTRKNLPRPNVDRDAPDIRVNVWLHKETASIALDLSGDGLHLRGYRDRAGIAPIKETLAAAIVMRSGWQPGTPLLDPMCGSGTLLIEAAMLATDRAPGLHRGRWGFSGWTQHDEAIWQEVKAEAQTRARKGLAEYSSHFYGSDSDARVIQRARTNARLAGIGELITFEVNDVAQLANPLPKGPYGTVLSNPPYGERLDSEPALIALHSLLGRIMKNQFGGWNLSLFSASPDLLSCLQLRADKQYKAKNGPLDCVQKNYHVAESTPDSKPVMAAEDYANRLRKNLKKFEKWARQEGIECYRLYDADLPEYNVAVDRYADWVVVQEYAPPKTIDAHKARQRLFDIIAATISVLGIAPNKLVLKTRERQKGKNQYQKLGEKGEFLEVTEYNAHLWVNLTDYLDTGLFLDHRIARRMLGQMSKGKDFLNLFSYTGSATVHAGLGGARSTTTVDMSRTYLEWAERNLRLNGLTGRAHRLIQADCLAWLREANEQFDLIFIDPPTFSNSKRMEDAFDVQRDHLALMKDLKRLLRAGGTIMFSNNKRGFRMDLDGLAKLGLKAQEITQKTLSQDFARNRQIHNCWLITAA.

Positions 43–154 (LVYQSLMWSR…KETASIALDL (112 aa)) constitute a THUMP domain.

The protein belongs to the methyltransferase superfamily. RlmKL family.

The protein localises to the cytoplasm. The catalysed reaction is guanosine(2445) in 23S rRNA + S-adenosyl-L-methionine = N(2)-methylguanosine(2445) in 23S rRNA + S-adenosyl-L-homocysteine + H(+). It carries out the reaction guanosine(2069) in 23S rRNA + S-adenosyl-L-methionine = N(2)-methylguanosine(2069) in 23S rRNA + S-adenosyl-L-homocysteine + H(+). Its function is as follows. Specifically methylates the guanine in position 2445 (m2G2445) and the guanine in position 2069 (m7G2069) of 23S rRNA. The protein is Ribosomal RNA large subunit methyltransferase K/L of Escherichia coli O6:H1 (strain CFT073 / ATCC 700928 / UPEC).